Reading from the N-terminus, the 418-residue chain is Chromo domain-containing protein rhino (418 aa).

The Chromo domain occupies 24-74; it reads YVVEKILGKRFVNGRPQVLVKWSGFPNENNTWEPLENVGNCMKLVSDFESE. 2 stretches are compositionally biased toward low complexity: residues 84-99 and 107-120; these read AKSV…SSGP and SSSK…KSVQ. Disordered regions lie at residues 84–167 and 199–337; these read AKSV…TDST and PTKD…RCPR. Positions 131-143 are enriched in basic residues; the sequence is NQKKGKNIKKTAG. Over residues 152 to 167 the composition is skewed to polar residues; that stretch reads PKTQMPSTSQVSTDST. A compositionally biased stretch (basic and acidic residues) spans 218–228; it reads RLIEFPQREDA. A compositionally biased stretch (low complexity) spans 258–275; sequence GESSSSMSLPTVSSTSSE. The span at 276 to 285 shows a compositional bias: basic and acidic residues; that stretch reads KSIKVTKSEP. Residues 353-418 are required for interaction with del/deadlock; sequence TKPFGVNRGL…FESLRIIVPK (66 aa).

As to quaternary structure, homodimer in solution. Dimerization is essential for chromatin binding. Component of the Rhino-Deadlock-Cutoff (RDC) complex, composed of rhi/rhino, del/deadlock and cuff/cutoff. Interacts (via C-terminus) with del/deadlock (via N-terminus); this interaction is direct. Two copies of del/deadlock associate with each rhi/rhino dimer. Interacts with cuff/cutoff; this interaction is indirect and is mediated by del/deadlock. Interacts (via Chromo domain) with kipf/kipferl (via C2H2 type zinc finger 4). Interacts (via Chromo domain) with His3/histone H3 (via N-terminus di- or tri-methylated on 'Lys-10' (H3K9me2/3)); this interaction is direct. Two His3 N-terminal tails oriented anti-parallel to each other are required for dimer binding to His3. As to expression, female specific, expressed in both somatic and germline cells but highly enriched in ovaries. In the germarium of the developing oocyte expressed in germline stem cells, cystoblasts and developing germline cysts. Expressed in nurse cells in the germarium and egg chamber.

The protein localises to the nucleus. It localises to the chromosome. In terms of biological role, involved in piRNA (piwi-interacting RNA)-mediated transposon repression. May be involved in formation of the perinuclear nuage, a subcellular structure implicated in RNA processing that may be involved in transposon RNA surveillance and silencing. Required for ping-pong amplification during piRNA biogenesis, probably by promoting transcription of piRNA precursors. As part of the Rhino-Deadlock-Cutoff (RDC) Complex associates with, and drives non-canonical transcription of germline specific dual-strand piRNA clusters 80F, 38C and 42AB, but not single-stranded piRNA cluster 20A. Induction of piRNA expression is potentially achieved through a mechanism that prevents transcriptional termination and leads to readthrough from flanking transcription units. Recruited to specific chromatin regions by a combination of H3K9me2/3 histone methylation and differentially expressed sequence-specific recruitment factors. This association may involve direct interaction with DNA. Associates with chromatin upon exposure to homologous piRNA and facilitates transcriptional read-through. As part of the RDC complex, involved in suppression of splicing. In ovaries, recruitment to specific heterochromatin clusters is nucleated and stabilized by kipf/kipferl. During oogenesis, involved in axis specification and may regulate chromosome condensation at the onset of a mitotic-like phase that occurs during nurse cell chromosome duplication. Involved in the distribution of mRNAs for proteins that play a role in anterior-posterior and dorsal-ventral axes specification during development of the oocyte, including grk/gurken, osk/oskar and vas/vasa. Mitigates meiotic double strand breaks and interacts with DNA damage signaling to mediate axis specification. The protein is Chromo domain-containing protein rhino of Drosophila melanogaster (Fruit fly).